Here is a 212-residue protein sequence, read N- to C-terminus: Imidazole glycerol phosphate synthase subunit HisH (212 aa).

One can recognise a Glutamine amidotransferase type-1 domain in the interval 3 to 212 (SIAVVDYGMG…LLSNFLKWTP (210 aa)). Cys82 acts as the Nucleophile in catalysis. Active-site residues include His192 and Glu194.

As to quaternary structure, heterodimer of HisH and HisF.

The protein resides in the cytoplasm. The enzyme catalyses 5-[(5-phospho-1-deoxy-D-ribulos-1-ylimino)methylamino]-1-(5-phospho-beta-D-ribosyl)imidazole-4-carboxamide + L-glutamine = D-erythro-1-(imidazol-4-yl)glycerol 3-phosphate + 5-amino-1-(5-phospho-beta-D-ribosyl)imidazole-4-carboxamide + L-glutamate + H(+). It catalyses the reaction L-glutamine + H2O = L-glutamate + NH4(+). It participates in amino-acid biosynthesis; L-histidine biosynthesis; L-histidine from 5-phospho-alpha-D-ribose 1-diphosphate: step 5/9. Functionally, IGPS catalyzes the conversion of PRFAR and glutamine to IGP, AICAR and glutamate. The HisH subunit catalyzes the hydrolysis of glutamine to glutamate and ammonia as part of the synthesis of IGP and AICAR. The resulting ammonia molecule is channeled to the active site of HisF. The sequence is that of Imidazole glycerol phosphate synthase subunit HisH from Nitrosomonas europaea (strain ATCC 19718 / CIP 103999 / KCTC 2705 / NBRC 14298).